Here is a 156-residue protein sequence, read N- to C-terminus: Arginine repressor (156 aa).

The protein belongs to the ArgR family.

The protein resides in the cytoplasm. It functions in the pathway amino-acid biosynthesis; L-arginine biosynthesis [regulation]. Its function is as follows. Regulates arginine biosynthesis genes. This chain is Arginine repressor, found in Erwinia tasmaniensis (strain DSM 17950 / CFBP 7177 / CIP 109463 / NCPPB 4357 / Et1/99).